Reading from the N-terminus, the 545-residue chain is Germacrene D synthase 1 (545 aa).

Positions 298, 302, 443, and 451 each coordinate Mg(2+). The DDXXD motif signature appears at 298–302 (DDTFD).

It belongs to the terpene synthase family. Mg(2+) is required as a cofactor.

It is found in the cytoplasm. The protein localises to the cytosol. The catalysed reaction is (2E,6E)-farnesyl diphosphate = (-)-germacrene D + diphosphate. It participates in secondary metabolite biosynthesis; terpenoid biosynthesis. Sesquiterpene synthase involved in germacrene D biosynthesis. Also produces at least 13 additional sesquiterpene products, including germacrene C and (+)-germacrene A, beta-ylangene, (E)-beta-farnesene and (E,E)-alpha-farnesene. The sequence is that of Germacrene D synthase 1 from Pogostemon cablin (Patchouli).